We begin with the raw amino-acid sequence, 316 residues long: CD-NTase-associated protein 12 (316 aa).

Positions 4 to 121 (RIFIGSSSEG…MLGITQTRYE (118 aa)) constitute a TIR domain. The interval 161-316 (STVIAISYFE…ECVEIIEPQP (156 aa)) is STING domain. 3 residues coordinate 3',3'-c-di-GMP: F172, P237, and D253.

This sequence in the C-terminal section; belongs to the bacterial STING family. Forms homodimers; in the presence of c-di-GMP forms filaments with an ordered array of parallel-stacked subunits.

The catalysed reaction is NAD(+) + H2O = ADP-D-ribose + nicotinamide + H(+). Its activity is regulated as follows. NAD(+) hydrolase activity is strongly stimulated by c-di-GMP, weakly by 3'3'-cGAMP, very weakly by c-di-AMP but not at all by 2'3'-cGAMP. Self-association of TIR domains is required for NADase activity. Its function is as follows. Effector protein of a CBASS antiviral system with NAD(+) hydrolase activity. CBASS (cyclic oligonucleotide-based antiphage signaling system) provides immunity against bacteriophage. The CD-NTase protein synthesizes cyclic nucleotides in response to infection; these serve as specific second messenger signals. The signals activate a diverse range of effectors, leading to bacterial cell death and thus abortive phage infection. A type I-D(GG) CBASS system. In terms of biological role, binds c-di-GMP (synthesized by the cognate CdnE encoded upstream in the same operon) but not c-di-AMP, 2'-3'-cGAMP, 3'-3'-cGAMP or cUMP-AMP (tested without the N-terminal TIR domain). Upon activation by c-di-GMP forms filaments which hydrolyze NAD(+); filament formation is required for enzyme activation. The sequence is that of CD-NTase-associated protein 12 from Lachnospiraceae bacterium (strain RUG226).